Reading from the N-terminus, the 318-residue chain is Ferredoxin--NADP reductase (318 aa).

7 residues coordinate FAD: Asp33, Gln41, Tyr46, Val84, Phe115, Asp276, and Thr316.

This sequence belongs to the ferredoxin--NADP reductase type 2 family. As to quaternary structure, homodimer. It depends on FAD as a cofactor.

It carries out the reaction 2 reduced [2Fe-2S]-[ferredoxin] + NADP(+) + H(+) = 2 oxidized [2Fe-2S]-[ferredoxin] + NADPH. This is Ferredoxin--NADP reductase from Lactobacillus gasseri (strain ATCC 33323 / DSM 20243 / BCRC 14619 / CIP 102991 / JCM 1131 / KCTC 3163 / NCIMB 11718 / NCTC 13722 / AM63).